The chain runs to 188 residues: Ribosome maturation factor RimM (188 aa).

The PRC barrel domain maps to 112–187 (SDSYYWVDLI…LLTLDWQSDW (76 aa)).

This sequence belongs to the RimM family. Binds ribosomal protein uS19.

It localises to the cytoplasm. An accessory protein needed during the final step in the assembly of 30S ribosomal subunit, possibly for assembly of the head region. Essential for efficient processing of 16S rRNA. May be needed both before and after RbfA during the maturation of 16S rRNA. It has affinity for free ribosomal 30S subunits but not for 70S ribosomes. This is Ribosome maturation factor RimM from Polynucleobacter asymbioticus (strain DSM 18221 / CIP 109841 / QLW-P1DMWA-1) (Polynucleobacter necessarius subsp. asymbioticus).